We begin with the raw amino-acid sequence, 254 residues long: N-acetylglucosaminyldiphosphoundecaprenol N-acetyl-beta-D-mannosaminyltransferase (254 aa).

The protein belongs to the glycosyltransferase 26 family. TagA/TarA subfamily.

It catalyses the reaction UDP-N-acetyl-alpha-D-mannosamine + N-acetyl-alpha-D-glucosaminyl-di-trans,octa-cis-undecaprenyl diphosphate = N-acetyl-beta-D-mannosaminyl-(1-&gt;4)-N-acetyl-alpha-D-glucosaminyl di-trans,octa-cis-undecaprenyl diphosphate + UDP + H(+). Its pathway is cell wall biogenesis; poly(ribitol phosphate) teichoic acid biosynthesis. In terms of biological role, catalyzes the conversion of GlcNAc-PP-undecaprenol into ManNAc-GlcNAc-PP-undecaprenol, the first committed lipid intermediate in the de novo synthesis of teichoic acid. This is N-acetylglucosaminyldiphosphoundecaprenol N-acetyl-beta-D-mannosaminyltransferase from Staphylococcus aureus (strain NCTC 8325 / PS 47).